A 273-amino-acid polypeptide reads, in one-letter code: DNA repair protein RecO (273 aa).

A disordered region spans residues 249-273 (GRSLTEEPELKAEQTEAEKESQRPR). Positions 252–273 (LTEEPELKAEQTEAEKESQRPR) are enriched in basic and acidic residues.

It belongs to the RecO family.

Its function is as follows. Involved in DNA repair and RecF pathway recombination. This Heliobacterium modesticaldum (strain ATCC 51547 / Ice1) protein is DNA repair protein RecO.